The following is a 168-amino-acid chain: Lipoprotein signal peptidase (168 aa).

The next 4 helical transmembrane spans lie at 15–35 (WLWLAILVFIADIGIKLVVMD), 47–67 (VLPFFNLLYVHNYGAAFSFLS), 75–95 (WLFTGIAFVVTGLLTYWMSKL), and 107–127 (ALIIGGAVGNVFDRVVHGFVV). Residues aspartate 128 and aspartate 146 contribute to the active site. Residues 141 to 161 (AFNLADTTICIGAAMIILDGF) form a helical membrane-spanning segment.

It belongs to the peptidase A8 family.

Its subcellular location is the cell inner membrane. The catalysed reaction is Release of signal peptides from bacterial membrane prolipoproteins. Hydrolyzes -Xaa-Yaa-Zaa-|-(S,diacylglyceryl)Cys-, in which Xaa is hydrophobic (preferably Leu), and Yaa (Ala or Ser) and Zaa (Gly or Ala) have small, neutral side chains.. Its pathway is protein modification; lipoprotein biosynthesis (signal peptide cleavage). Functionally, this protein specifically catalyzes the removal of signal peptides from prolipoproteins. The chain is Lipoprotein signal peptidase from Vibrio campbellii (strain ATCC BAA-1116).